A 428-amino-acid chain; its full sequence is Keratin, type I cytoskeletal 18-A (428 aa).

A head region spans residues 2–78 (SSSRSVYSSS…NVNLFGGVQN (77 aa)). The interval 24-45 (SAPRFTPGSSAASVHAGAGGSG) is disordered. A coil 1A region spans residues 79-114 (EKETMQDLNDRLASYLERVRSLESANKKLEVQIRQH). Residues 79 to 389 (EKETMQDLND…RLLEGDSFDL (311 aa)) enclose the IF rod domain. The linker 1 stretch occupies residues 115–130 (TEKKGPAKDWSPYYMT). The interval 131-222 (IEDLKKQVFN…KNHQDDVNEL (92 aa)) is coil 1B. The tract at residues 223–246 (QAQIASSAVTVEVDAPKSQDLGKI) is linker 12. The segment at 247–384 (MADLRAQYDE…IQTYRRLLEG (138 aa)) is coil 2. Residues 385–428 (DSFDLQDAVPVVTTQTVKKVITTTQRLVDGKVVAESNNTEVIKS) are tail.

This sequence belongs to the intermediate filament family. Heterotetramer of two type I and two type II keratins. Keratin-18 associates with keratin-8. Proteolytically cleaved by caspases during epithelial cell apoptosis. Expressed at high levels in notochord and low levels in adult liver.

In terms of biological role, when phosphorylated, plays a role in filament reorganization. This Xenopus laevis (African clawed frog) protein is Keratin, type I cytoskeletal 18-A (krt18-a).